A 485-amino-acid chain; its full sequence is Glutamyl-tRNA(Gln) amidotransferase subunit A (485 aa).

Catalysis depends on charge relay system residues K78 and S153. Catalysis depends on S177, which acts as the Acyl-ester intermediate.

This sequence belongs to the amidase family. GatA subfamily. As to quaternary structure, heterotrimer of A, B and C subunits.

The catalysed reaction is L-glutamyl-tRNA(Gln) + L-glutamine + ATP + H2O = L-glutaminyl-tRNA(Gln) + L-glutamate + ADP + phosphate + H(+). In terms of biological role, allows the formation of correctly charged Gln-tRNA(Gln) through the transamidation of misacylated Glu-tRNA(Gln) in organisms which lack glutaminyl-tRNA synthetase. The reaction takes place in the presence of glutamine and ATP through an activated gamma-phospho-Glu-tRNA(Gln). This Geotalea daltonii (strain DSM 22248 / JCM 15807 / FRC-32) (Geobacter daltonii) protein is Glutamyl-tRNA(Gln) amidotransferase subunit A.